The primary structure comprises 54 residues: uncharacterized protein (54 aa).

2 stretches are compositionally biased toward basic and acidic residues: residues 1–19 (MTEK…HNDL) and 26–54 (EELK…YDTK). A disordered region spans residues 1–54 (MTEKKQQNKPNENPEHNDLTDPIPNEELKENMNDEKHKRQQRDNSQSERDYDTK).

This is an uncharacterized protein from Bacillus subtilis (strain 168).